Reading from the N-terminus, the 612-residue chain is Beta-mannosyltransferase 5 (612 aa).

Topologically, residues M1 to S12 are cytoplasmic. Residues I13–L33 form a helical membrane-spanning segment. Residues V34 to N612 lie on the Extracellular side of the membrane. N-linked (GlcNAc...) asparagine glycosylation is found at N224, N230, and N480.

This sequence belongs to the BMT family.

It is found in the membrane. Its function is as follows. Beta-mannosyltransferase involved in cell wall biosynthesis. Required for beta-1,2-mannose transfer on phospholipomannan. The protein is Beta-mannosyltransferase 5 (BMT5) of Candida albicans (strain SC5314 / ATCC MYA-2876) (Yeast).